A 144-amino-acid polypeptide reads, in one-letter code: MAKRGGKRTVGVPYRFHVTPGIFMNSLVPVADNSGAKLVRVIGVVGHYSKTVHRRIPGAGVGDMVVVVVREGKPELRKQIFRAIVVRQRRPYRRPDGTWVAFEDNAVVIVTPEGDPKGSEIHGPVAMEATLRWPTIANLASIVV.

It belongs to the universal ribosomal protein uL14 family. In terms of assembly, part of the 50S ribosomal subunit. Forms a cluster with proteins L3 and L24e, part of which may contact the 16S rRNA in 2 intersubunit bridges.

Binds to 23S rRNA. Forms part of two intersubunit bridges in the 70S ribosome. In Pyrobaculum aerophilum (strain ATCC 51768 / DSM 7523 / JCM 9630 / CIP 104966 / NBRC 100827 / IM2), this protein is Large ribosomal subunit protein uL14.